Reading from the N-terminus, the 91-residue chain is MGRSLKKGPFIADSLLKKVEKQNTENDKSVIKTWSRSSTILPVMIGHTIAVHNGKAHIPVFITEQMIGHKLGEFAPTRTYRGHLRDKKGAR.

The protein belongs to the universal ribosomal protein uS19 family.

Functionally, protein S19 forms a complex with S13 that binds strongly to the 16S ribosomal RNA. The protein is Small ribosomal subunit protein uS19 of Prochlorococcus marinus (strain MIT 9515).